Here is a 478-residue protein sequence, read N- to C-terminus: Stromelysin-1 (478 aa).

The signal sequence occupies residues 1-17; that stretch reads MQNLPALLLFCGVVCSA. The propeptide at 18–99 is activation peptide; it reads YPVDRAAEDE…PRCGVPDVGD (82 aa). The Cysteine switch signature appears at 90 to 97; it reads PRCGVPDV. Cys92 is a binding site for Zn(2+). Asp124 and Asp158 together coordinate Ca(2+). 2 residues coordinate Zn(2+): His168 and Asp170. Residues Asp175, Gly176, Gly178, and Val180 each contribute to the Ca(2+) site. His183 serves as a coordination point for Zn(2+). Gly190 and Asp194 together coordinate Ca(2+). His196 is a Zn(2+) binding site. Residues Asp198, Asp199, and Glu201 each coordinate Ca(2+). His218 provides a ligand contact to Zn(2+). Residue Glu219 is part of the active site. Zn(2+) is bound by residues His222 and His228. The interval 260-286 is disordered; it reads QSLYGGPPSDSSNDPVVPTESVPPGPG. Positions 266 to 277 are enriched in low complexity; sequence PPSDSSNDPVVP. Hemopexin repeat units lie at residues 288 to 337, 338 to 384, 386 to 434, and 435 to 478; these read PAAC…WPSL, PSGL…GFPP, VKKI…FPGV, and DSKV…WLNC. An intrachain disulfide couples Cys291 to Cys478. Asp298 serves as a coordination point for Ca(2+). Positions 390 and 439 each coordinate Ca(2+). Asn452 carries N-linked (GlcNAc...) asparagine glycosylation.

The protein belongs to the peptidase M10A family. Ca(2+) is required as a cofactor. It depends on Zn(2+) as a cofactor.

The protein resides in the secreted. The protein localises to the extracellular space. Its subcellular location is the extracellular matrix. The catalysed reaction is Preferential cleavage where P1', P2' and P3' are hydrophobic residues.. In terms of biological role, metalloproteinase with a rather broad substrate specificity that can degrade fibronectin, laminin, gelatins of type I, III, IV, and V; collagens III, IV, X, and IX, and cartilage proteoglycans. Activates different molecules including growth factors, plasminogen or other matrix metalloproteinases such as MMP9. Once released into the extracellular matrix (ECM), the inactive pro-enzyme is activated by the plasmin cascade signaling pathway. Also acts intracellularly. For example, in dopaminergic neurons, gets activated by the serine protease HTRA2 upon stress and plays a pivotal role in DA neuronal degeneration by mediating microglial activation and alpha-synuclein/SNCA cleavage. In addition, plays a role in immune response and possesses antiviral activity against various viruses. Mechanistically, translocates from the cytoplasm into the cell nucleus upon virus infection to influence NF-kappa-B activities. The polypeptide is Stromelysin-1 (MMP3) (Canis lupus familiaris (Dog)).